Here is an 879-residue protein sequence, read N- to C-terminus: Alanine--tRNA ligase (879 aa).

His-566, His-570, Cys-668, and His-672 together coordinate Zn(2+).

It belongs to the class-II aminoacyl-tRNA synthetase family. The cofactor is Zn(2+).

It is found in the cytoplasm. It carries out the reaction tRNA(Ala) + L-alanine + ATP = L-alanyl-tRNA(Ala) + AMP + diphosphate. In terms of biological role, catalyzes the attachment of alanine to tRNA(Ala) in a two-step reaction: alanine is first activated by ATP to form Ala-AMP and then transferred to the acceptor end of tRNA(Ala). Also edits incorrectly charged Ser-tRNA(Ala) and Gly-tRNA(Ala) via its editing domain. This is Alanine--tRNA ligase from Clostridium perfringens (strain 13 / Type A).